We begin with the raw amino-acid sequence, 40 residues long: Large ribosomal subunit protein bL36 (40 aa).

This sequence belongs to the bacterial ribosomal protein bL36 family.

The protein is Large ribosomal subunit protein bL36 of Corynebacterium diphtheriae (strain ATCC 700971 / NCTC 13129 / Biotype gravis).